The sequence spans 190 residues: Threonylcarbamoyl-AMP synthase (190 aa).

One can recognise a YrdC-like domain in the interval 7-190 (TGSIAAVVDL…ALTGELFRQG (184 aa)).

It belongs to the SUA5 family. TsaC subfamily.

Its subcellular location is the cytoplasm. It catalyses the reaction L-threonine + hydrogencarbonate + ATP = L-threonylcarbamoyladenylate + diphosphate + H2O. Required for the formation of a threonylcarbamoyl group on adenosine at position 37 (t(6)A37) in tRNAs that read codons beginning with adenine. Catalyzes the conversion of L-threonine, HCO(3)(-)/CO(2) and ATP to give threonylcarbamoyl-AMP (TC-AMP) as the acyladenylate intermediate, with the release of diphosphate. The polypeptide is Threonylcarbamoyl-AMP synthase (Salmonella paratyphi A (strain ATCC 9150 / SARB42)).